Here is a 309-residue protein sequence, read N- to C-terminus: Metal ABC transporter substrate-binding lipoprotein FimA (309 aa).

The signal sequence occupies residues 1 to 20; the sequence is MKKIASVLALFVALLFGLLA. Cys-21 carries the N-palmitoyl cysteine lipid modification. Cys-21 carries the S-diacylglycerol cysteine lipid modification. A divalent metal cation is bound by residues His-67, His-139, Glu-205, and Asp-280.

It belongs to the bacterial solute-binding protein 9 family. Lipoprotein receptor antigen (Lrai) subfamily.

It localises to the cell membrane. Functionally, part of an ATP-binding cassette (ABC) transport system involved in metal import. Binds a metal with high affinity and specificity and delivers it to the membrane permease for translocation into the cytoplasm. Also acts as an adhesin which is involved on adherence to extracellular matrix. It is an important factor in pathogenesis and infection. May contribute to the formation and accumulation of dental plaque. The protein is Metal ABC transporter substrate-binding lipoprotein FimA (fimA) of Streptococcus parasanguinis.